Reading from the N-terminus, the 323-residue chain is Apolipoprotein E (323 aa).

Positions 1–18 (MKVLWAALVVTLLAGCWA) are cleaved as a signal peptide. 8 consecutive repeat copies span residues 86–107 (ALMD…EQLG), 108–129 (PMTS…ARLR), 130–151 (SDME…AMLG), 152–173 (QSSE…KRVL), 174–195 (RDAE…EGAE), 196–217 (RSVS…ERNA), 218–239 (KVGA…QQLR), and 240–261 (GQLE…EQIQ). The tract at residues 86–261 (ALMDETMKEV…HLEEMREQIQ (176 aa)) is 8 X 22 AA approximate tandem repeats. Met-149 bears the Methionine sulfoxide mark. Ser-153 carries the phosphoserine modification. An LDL and other lipoprotein receptors binding region spans residues 164–174 (HMRKLRKRVLR). 168 to 171 (LRKR) provides a ligand contact to heparin. Positions 216–296 (NAKVGALATQ…SWFEPLLEDM (81 aa)) are lipid-binding and lipoprotein association. A heparin-binding site is contributed by 235–242 (GQQLRGQL). Residues 272–323 (DQIRQKAEAFQARLKSWFEPLLEDMQRQWDGLVEKVQAAVATIPTSKPVEEP) are homooligomerization. Residues 284–296 (RLKSWFEPLLEDM) are specificity for association with VLDL.

The protein belongs to the apolipoprotein A1/A4/E family. Homotetramer. May interact with ABCA1; functionally associated with ABCA1 in the biogenesis of HDLs. May interact with APP/A4 amyloid-beta peptide; the interaction is extremely stable in vitro but its physiological significance is unclear. May interact with MAPT. May interact with MAP2. In the cerebrospinal fluid, interacts with secreted SORL1. Interacts with PMEL; this allows the loading of PMEL luminal fragment on ILVs to induce fibril nucleation. In terms of processing, APOE exists as multiple glycosylated and sialylated glycoforms within cells and in plasma. The extent of glycosylation and sialylation are tissue and context specific. Glycated in plasma VLDL. Post-translationally, phosphorylated by FAM20C in the extracellular medium.

It localises to the secreted. The protein resides in the extracellular space. Its subcellular location is the extracellular matrix. It is found in the extracellular vesicle. The protein localises to the endosome. It localises to the multivesicular body. APOE is an apolipoprotein, a protein associating with lipid particles, that mainly functions in lipoprotein-mediated lipid transport between organs via the plasma and interstitial fluids. APOE is a core component of plasma lipoproteins and is involved in their production, conversion and clearance. Apolipoproteins are amphipathic molecules that interact both with lipids of the lipoprotein particle core and the aqueous environment of the plasma. As such, APOE associates with chylomicrons, chylomicron remnants, very low density lipoproteins (VLDL) and intermediate density lipoproteins (IDL) but shows a preferential binding to high-density lipoproteins (HDL). It also binds a wide range of cellular receptors including the LDL receptor/LDLR and the very low-density lipoprotein receptor/VLDLR that mediate the cellular uptake of the APOE-containing lipoprotein particles. Finally, APOE also has a heparin-binding activity and binds heparan-sulfate proteoglycans on the surface of cells, a property that supports the capture and the receptor-mediated uptake of APOE-containing lipoproteins by cells. The sequence is that of Apolipoprotein E (APOE) from Canis lupus familiaris (Dog).